Here is a 423-residue protein sequence, read N- to C-terminus: uncharacterized protein (423 aa).

This sequence belongs to the mycobacterial PPE family.

Functionally, could be required for host endothelial-cell invasion and/or intracellular survival. This is an uncharacterized protein from Mycobacterium tuberculosis (strain CDC 1551 / Oshkosh).